A 354-amino-acid chain; its full sequence is Cellular communication network factor 6 (354 aa).

The signal sequence occupies residues 1-23 (MRRLLFCTLLMTGLTQLCCRTQG). Residues 44–117 (RTEVCRWPCR…RYETGVCAYL (74 aa)) form the IGFBP N-terminal domain. Intrachain disulfides connect Cys-48/Cys-72, Cys-52/Cys-74, Cys-54/Cys-75, Cys-61/Cys-78, Cys-86/Cys-100, Cys-92/Cys-114, Cys-209/Cys-238, Cys-219/Cys-223, Cys-247/Cys-252, Cys-268/Cys-305, Cys-285/Cys-319, Cys-296/Cys-335, and Cys-299/Cys-337. The TSP type-1 domain maps to 208-253 (KCLVQATKWTPCSRTCGMGISNRVTNDNANCEMRKERRLCYIQPCS). The region spanning 268 to 342 (CQPTFQLPKA…TSCVCQRDCR (75 aa)) is the CTCK domain. Asn-308 carries N-linked (GlcNAc...) asparagine glycosylation.

The protein belongs to the CCN family.

It is found in the secreted. The protein resides in the mitochondrion. Plays a role in mitochondrial electron transport and mitochondrial respiration. The protein is Cellular communication network factor 6 of Mus musculus (Mouse).